We begin with the raw amino-acid sequence, 642 residues long: Threonine--tRNA ligase (642 aa).

The TGS domain maps to 1 to 63; that stretch reads MSEIVVTLPD…TDDCELVIVT (63 aa). The segment at 242–533 is catalytic; it reads DHRKLGQELD…LIEHFDGNFP (292 aa). 3 residues coordinate Zn(2+): Cys-334, His-385, and His-510.

The protein belongs to the class-II aminoacyl-tRNA synthetase family. Homodimer. It depends on Zn(2+) as a cofactor.

The protein resides in the cytoplasm. The enzyme catalyses tRNA(Thr) + L-threonine + ATP = L-threonyl-tRNA(Thr) + AMP + diphosphate + H(+). Its function is as follows. Catalyzes the attachment of threonine to tRNA(Thr) in a two-step reaction: L-threonine is first activated by ATP to form Thr-AMP and then transferred to the acceptor end of tRNA(Thr). This chain is Threonine--tRNA ligase, found in Natronomonas pharaonis (strain ATCC 35678 / DSM 2160 / CIP 103997 / JCM 8858 / NBRC 14720 / NCIMB 2260 / Gabara) (Halobacterium pharaonis).